Here is a 449-residue protein sequence, read N- to C-terminus: Xylose isomerase (449 aa).

Residues His101 and Asp104 contribute to the active site. Positions 232, 268, 271, 296, 307, 309, and 340 each coordinate Mg(2+).

The protein belongs to the xylose isomerase family. Homotetramer. Mg(2+) is required as a cofactor.

It is found in the cytoplasm. The catalysed reaction is alpha-D-xylose = alpha-D-xylulofuranose. In Bifidobacterium longum (strain NCC 2705), this protein is Xylose isomerase.